Here is a 142-residue protein sequence, read N- to C-terminus: Small ribosomal subunit protein bS6 (142 aa).

A compositionally biased stretch (basic and acidic residues) spans 113-136; the sequence is IKKEPREPREPRAPREPKAEKIEE. A disordered region spans residues 113–142; sequence IKKEPREPREPRAPREPKAEKIEEQTFSEE.

This sequence belongs to the bacterial ribosomal protein bS6 family.

Functionally, binds together with bS18 to 16S ribosomal RNA. The polypeptide is Small ribosomal subunit protein bS6 (Campylobacter curvus (strain 525.92)).